The chain runs to 139 residues: Chemical-damaging agent resistance protein B (139 aa).

This sequence belongs to the CAPAB/TerDEXZ family.

Its function is as follows. Not known; could confer methyl methane sulfonate (MMS), mitomycin C (MC), and UV resistance. The polypeptide is Chemical-damaging agent resistance protein B (Clostridium acetobutylicum).